A 514-amino-acid polypeptide reads, in one-letter code: Phospholipase C D (514 aa).

The segment at residues 1 to 37 (MSQSHIGGVSRREFLAKVAAGGAGALMSFAGPVIEKA) is a signal peptide (tat-type signal). The tract at residues 492 to 514 (VPDPQIMPTQETTPTRGIPSGPC) is disordered.

The protein belongs to the bacterial phospholipase C family. In terms of processing, predicted to be exported by the Tat system. The position of the signal peptide cleavage has not been experimentally proven.

It is found in the secreted. The protein resides in the cell wall. It carries out the reaction a 1,2-diacyl-sn-glycero-3-phosphocholine + H2O = phosphocholine + a 1,2-diacyl-sn-glycerol + H(+). In terms of biological role, involved in virulence. Induces cytotoxic effects on mouse macrophage cell lines, via direct or indirect enzymatic hydrolysis of cell membrane phospholipids. Hydrolyzes phosphatidylcholine. This is Phospholipase C D from Mycobacterium tuberculosis (strain CDC 1551 / Oshkosh).